Consider the following 423-residue polypeptide: Acetylornithine aminotransferase, mitochondrial (423 aa).

An N6-(pyridoxal phosphate)lysine modification is found at Lys-276.

Belongs to the class-III pyridoxal-phosphate-dependent aminotransferase family. It depends on pyridoxal 5'-phosphate as a cofactor.

The protein localises to the mitochondrion matrix. It catalyses the reaction N(2)-acetyl-L-ornithine + 2-oxoglutarate = N-acetyl-L-glutamate 5-semialdehyde + L-glutamate. Its pathway is amino-acid biosynthesis; L-arginine biosynthesis; N(2)-acetyl-L-ornithine from L-glutamate: step 4/4. This is Acetylornithine aminotransferase, mitochondrial (ARG8) from Eremothecium gossypii (strain ATCC 10895 / CBS 109.51 / FGSC 9923 / NRRL Y-1056) (Yeast).